The following is a 274-amino-acid chain: Large ribosomal subunit protein uL2 (274 aa).

The segment at valine 223–lysine 274 is disordered.

It belongs to the universal ribosomal protein uL2 family. In terms of assembly, part of the 50S ribosomal subunit. Forms a bridge to the 30S subunit in the 70S ribosome.

In terms of biological role, one of the primary rRNA binding proteins. Required for association of the 30S and 50S subunits to form the 70S ribosome, for tRNA binding and peptide bond formation. It has been suggested to have peptidyltransferase activity; this is somewhat controversial. Makes several contacts with the 16S rRNA in the 70S ribosome. The polypeptide is Large ribosomal subunit protein uL2 (Aliivibrio fischeri (strain ATCC 700601 / ES114) (Vibrio fischeri)).